We begin with the raw amino-acid sequence, 447 residues long: METAEPVSYEFPGHAVGAVAPRRMMGSNVGHNFPFYTNPTGGYTLPFHQSSSPAYSFGHTLNHHHHHHHHHPGYQHYFVAGQQPINPQPVRLSSEPPSIQQIPDIRPAKNAVNRVARDPLMKIEHNGASQQPPGAQSSSNEEGAQGKSSSSNEVEFSTEVDILMKAIQAKASAQSPGVQSLPPLQQLTHGGSNGYPQSYSMPVTTPRCTVMVEEAPSRSGKKRKYACTLPQCGKSFAQKTHLDIHMRAHTGDKPFVCKEPSCGQRFSQLGNLKTHQRRHTGEKPFSCDICQKRFAQRGNVRAHKITHQHAKPFTCLLDDCGKQFTQLGNLKSHQNKFHATTLRNLTMKFSQVTEGDHMSPQDRKLWEYFATLYKNSNKGIKGRGKDRRISPTSRSDPGSESRRRIEPLSSTDDKMRRASYGDTSMYNGGSSSDDDDAEPYFIERQAH.

Disordered regions lie at residues 125–155 (HNGA…NEVE) and 174–199 (QSPG…PQSY). Residues 127–139 (GASQQPPGAQSSS) show a composition bias toward low complexity. Over residues 140–155 (NEEGAQGKSSSSNEVE) the composition is skewed to polar residues. 4 consecutive C2H2-type zinc fingers follow at residues 225-249 (YACT…MRAH), 255-279 (FVCK…QRRH), 285-307 (FSCD…KITH), and 313-338 (FTCL…NKFH). Positions 377-447 (NKGIKGRGKD…EPYFIERQAH (71 aa)) are disordered. The segment covering 397 to 416 (PGSESRRRIEPLSSTDDKMR) has biased composition (basic and acidic residues). A compositionally biased stretch (polar residues) spans 421–431 (GDTSMYNGGSS).

Its subcellular location is the nucleus. In terms of biological role, transcription factor that acts as a positive regulator of ochratoxin A (OTA) biosynthesis via controlling the expression of antioxidant genes and oxidative phosphorylation genes. This Aspergillus niger (strain ATCC MYA-4892 / CBS 513.88 / FGSC A1513) protein is Transcription factor azf1.